We begin with the raw amino-acid sequence, 226 residues long: Ribosome-recycling factor, mitochondrial (226 aa).

Belongs to the RRF family.

The protein localises to the mitochondrion. Functionally, necessary for protein synthesis in mitochondria. Functions as a ribosome recycling factor in mitochondria. This chain is Ribosome-recycling factor, mitochondrial (RRF1), found in Eremothecium gossypii (strain ATCC 10895 / CBS 109.51 / FGSC 9923 / NRRL Y-1056) (Yeast).